The primary structure comprises 254 residues: Arginine transport ATP-binding protein ArgV (254 aa).

Residues 6–250 enclose the ABC transporter domain; the sequence is IDAQQVCKNY…PKEQRTKDFL (245 aa). 38–45 contacts ATP; it reads GPSGSGKS.

Belongs to the ABC transporter superfamily. In terms of assembly, the complex is probably composed of two ATP-binding proteins (ArgV), two transmembrane proteins (ArgU) and a solute-binding protein (ArgT).

It is found in the cell membrane. The enzyme catalyses a polar amino acid(out) + ATP + H2O = a polar amino acid(in) + ADP + phosphate + H(+). It carries out the reaction L-arginine(out) + ATP + H2O = L-arginine(in) + ADP + phosphate + H(+). In terms of biological role, part of the ABC transporter complex ArgTUV involved in L-arginine import. May also transport L-citrulline. Probably responsible for energy coupling to the transport system. This Corynebacterium glutamicum (strain ATCC 13032 / DSM 20300 / JCM 1318 / BCRC 11384 / CCUG 27702 / LMG 3730 / NBRC 12168 / NCIMB 10025 / NRRL B-2784 / 534) protein is Arginine transport ATP-binding protein ArgV.